We begin with the raw amino-acid sequence, 245 residues long: Photosystem II protein PSBS1 (245 aa).

The transit peptide at 1–25 directs the protein to the chloroplast; it reads MAMTLSTKAFAQRGVSARKNTVRVY. The next 4 helical transmembrane spans lie at 72–92, 108–128, 185–205, and 217–237; these read LFVG…EILT, GIEV…AAVL, LGFA…LAQF, and EFGL…EGSG.

Belongs to the ELIP/psbS family.

It localises to the plastid. The protein localises to the chloroplast thylakoid membrane. Required for non-photochemical quenching (NPQ), a mechanism that converts and dissipates the harmful excess absorbed light energy into heat and protect the photosynthetic apparatus from photo-oxidative damage. Seems involved in the activation of NPQ, possibly by promoting conformational changes required for activation of LHCSR3-dependent quenching in the antenna of photosystem II (PSII). This is Photosystem II protein PSBS1 from Chlamydomonas reinhardtii (Chlamydomonas smithii).